Reading from the N-terminus, the 492-residue chain is Probable Xaa-Pro aminopeptidase AO090005001240 (492 aa).

Mn(2+)-binding residues include D272, D283, E420, and E459.

This sequence belongs to the peptidase M24B family. Mn(2+) is required as a cofactor.

The catalysed reaction is Release of any N-terminal amino acid, including proline, that is linked to proline, even from a dipeptide or tripeptide.. In terms of biological role, catalyzes the removal of a penultimate prolyl residue from the N-termini of peptides. The sequence is that of Probable Xaa-Pro aminopeptidase AO090005001240 from Aspergillus oryzae (strain ATCC 42149 / RIB 40) (Yellow koji mold).